Consider the following 508-residue polypeptide: MAP kinase kinase MKK1/SSP32 (508 aa).

3 disordered regions span residues 1-21 (MASL…PRLK), 35-95 (IYLT…LSIN), and 130-158 (ELSG…YLRN). Over residues 35 to 47 (IYLTSNGSSTTAY) the composition is skewed to polar residues. The segment covering 48–66 (SSHTPEPLTSSTSTLFSQT) has biased composition (low complexity). 2 stretches are compositionally biased toward polar residues: residues 67–79 (RLHP…TLNT) and 131–158 (LSGN…YLRN). Ser192 carries the phosphoserine modification. A Protein kinase domain is found at 221–488 (IETLGILGEG…PRQMINHPWI (268 aa)). Residues 227–235 (LGEGAGGSV) and Lys250 each bind ATP. Asp349 (proton acceptor) is an active-site residue.

Belongs to the protein kinase superfamily. STE Ser/Thr protein kinase family. MAP kinase kinase subfamily.

The enzyme catalyses L-seryl-[protein] + ATP = O-phospho-L-seryl-[protein] + ADP + H(+). It catalyses the reaction L-threonyl-[protein] + ATP = O-phospho-L-threonyl-[protein] + ADP + H(+). The catalysed reaction is L-tyrosyl-[protein] + ATP = O-phospho-L-tyrosyl-[protein] + ADP + H(+). Functionally, involved in a signal transduction pathway that play a role in yeast cell morphogenesis and cell growth. This pathway seems to start by SMP3; then involve the kinase PKC1 that may act on the BCK1 kinase that then phosphorylates MKK1 and MKK2 which themselves phosphorylate the MPK1 kinase. In Saccharomyces cerevisiae (strain ATCC 204508 / S288c) (Baker's yeast), this protein is MAP kinase kinase MKK1/SSP32 (MKK1).